The sequence spans 301 residues: NAD kinase (301 aa).

Asp73 acts as the Proton acceptor in catalysis. NAD(+) is bound by residues 73 to 74 (DG), 160 to 161 (NE), Arg188, Asp190, Ala198, 201 to 206 (TAYNIS), Ala225, and Gln257.

The protein belongs to the NAD kinase family. The cofactor is a divalent metal cation.

The protein localises to the cytoplasm. It catalyses the reaction NAD(+) + ATP = ADP + NADP(+) + H(+). Its function is as follows. Involved in the regulation of the intracellular balance of NAD and NADP, and is a key enzyme in the biosynthesis of NADP. Catalyzes specifically the phosphorylation on 2'-hydroxyl of the adenosine moiety of NAD to yield NADP. This is NAD kinase from Helicobacter hepaticus (strain ATCC 51449 / 3B1).